The sequence spans 195 residues: Ras-related protein rac-2 (195 aa).

10–17 is a binding site for GTP; it reads GDGAVGKT. The Effector region motif lies at 32–40; that stretch reads YILTVFDTY. GTP-binding positions include 57–61 and 115–118; these read DTAGQ and TKAD. Residues 176-195 are disordered; the sequence is GLTPPQTPQTRAKKSNCTVL. At cysteine 192 the chain carries Cysteine methyl ester. Cysteine 192 is lipidated: S-geranylgeranyl cysteine. Positions 193–195 are cleaved as a propeptide — removed in mature form; the sequence is TVL.

It belongs to the small GTPase superfamily. Rho family.

The protein localises to the cell membrane. In terms of biological role, during gonad morphogenesis, plays a role in distal tip cell (DTC)-mediated guidance of gonad elongation. This Caenorhabditis elegans protein is Ras-related protein rac-2 (rac-2).